Here is a 475-residue protein sequence, read N- to C-terminus: Ribulose bisphosphate carboxylase large chain (475 aa).

A propeptide spanning residues 1-2 (MA) is cleaved from the precursor. Pro3 is modified (N-acetylproline). Residue Lys14 is modified to N6,N6,N6-trimethyllysine. The substrate site is built by Asn123 and Thr173. Residue Lys175 is the Proton acceptor of the active site. Lys177 lines the substrate pocket. 3 residues coordinate Mg(2+): Lys201, Asp203, and Glu204. An N6-carboxylysine modification is found at Lys201. His294 functions as the Proton acceptor in the catalytic mechanism. Substrate-binding residues include Arg295, His327, and Ser379.

Belongs to the RuBisCO large chain family. Type I subfamily. Heterohexadecamer of 8 large chains and 8 small chains. The cofactor is Mg(2+).

Its subcellular location is the plastid. The protein resides in the chloroplast. It catalyses the reaction 2 (2R)-3-phosphoglycerate + 2 H(+) = D-ribulose 1,5-bisphosphate + CO2 + H2O. The enzyme catalyses D-ribulose 1,5-bisphosphate + O2 = 2-phosphoglycolate + (2R)-3-phosphoglycerate + 2 H(+). Functionally, ruBisCO catalyzes two reactions: the carboxylation of D-ribulose 1,5-bisphosphate, the primary event in carbon dioxide fixation, as well as the oxidative fragmentation of the pentose substrate in the photorespiration process. Both reactions occur simultaneously and in competition at the same active site. This is Ribulose bisphosphate carboxylase large chain from Nephroselmis olivacea (Green alga).